The chain runs to 173 residues: MSIILGIDPGSRITGYGVIRIVAGKAEYLGSGCIRTDFGELPSRLKQVYDGVSEIITQFKPDEFAIERVFMARNADSALKLGQARGSAIVAAVNALLPVSEYSATQIKQAVVGTGGAAKEQVQHMVTHLLKLSATPQADAADALGVAICHFHTRQSLIKMAGRATSSVRGRYR.

Residues D8, E67, and D139 contribute to the active site. Residues D8, E67, and D139 each coordinate Mg(2+).

It belongs to the RuvC family. Homodimer which binds Holliday junction (HJ) DNA. The HJ becomes 2-fold symmetrical on binding to RuvC with unstacked arms; it has a different conformation from HJ DNA in complex with RuvA. In the full resolvosome a probable DNA-RuvA(4)-RuvB(12)-RuvC(2) complex forms which resolves the HJ. Mg(2+) serves as cofactor.

The protein localises to the cytoplasm. It catalyses the reaction Endonucleolytic cleavage at a junction such as a reciprocal single-stranded crossover between two homologous DNA duplexes (Holliday junction).. Functionally, the RuvA-RuvB-RuvC complex processes Holliday junction (HJ) DNA during genetic recombination and DNA repair. Endonuclease that resolves HJ intermediates. Cleaves cruciform DNA by making single-stranded nicks across the HJ at symmetrical positions within the homologous arms, yielding a 5'-phosphate and a 3'-hydroxyl group; requires a central core of homology in the junction. The consensus cleavage sequence is 5'-(A/T)TT(C/G)-3'. Cleavage occurs on the 3'-side of the TT dinucleotide at the point of strand exchange. HJ branch migration catalyzed by RuvA-RuvB allows RuvC to scan DNA until it finds its consensus sequence, where it cleaves and resolves the cruciform DNA. The protein is Crossover junction endodeoxyribonuclease RuvC of Aeromonas salmonicida (strain A449).